We begin with the raw amino-acid sequence, 560 residues long: Poly(3-hydroxyalkanoate) polymerase 2 (560 aa).

Cys-296 is an active-site residue.

It belongs to the PHA/PHB synthase family. Type II PhaC subfamily.

The protein operates within biopolymer metabolism; poly-(R)-3-hydroxybutanoate biosynthesis. Functionally, synthesizes poly(3-hydroxyalkanoates) (PHA), complements a mutant of P.putida that does not make PHA. The chain is Poly(3-hydroxyalkanoate) polymerase 2 from Ectopseudomonas oleovorans (Pseudomonas oleovorans).